Here is a 284-residue protein sequence, read N- to C-terminus: Cytochrome P450 2C31 (284 aa).

Cysteine 229 provides a ligand contact to heme.

It belongs to the cytochrome P450 family. The cofactor is heme.

Its subcellular location is the endoplasmic reticulum membrane. It localises to the microsome membrane. It catalyses the reaction an organic molecule + reduced [NADPH--hemoprotein reductase] + O2 = an alcohol + oxidized [NADPH--hemoprotein reductase] + H2O + H(+). In terms of biological role, cytochromes P450 are a group of heme-thiolate monooxygenases. In liver microsomes, this enzyme is involved in an NADPH-dependent electron transport pathway. It oxidizes a variety of structurally unrelated compounds, including steroids, fatty acids, and xenobiotics. The chain is Cytochrome P450 2C31 (CYP2C31) from Capra hircus aegagrus (Wild goat).